The sequence spans 1065 residues: Carbamoyl phosphate synthase large chain (1065 aa).

The carboxyphosphate synthetic domain stretch occupies residues 1–401 (MPKRRDIETI…SLLKAVRSLE (401 aa)). ATP contacts are provided by Arg129, Arg169, Gly175, Gly176, Arg208, Ile210, Glu215, Gly241, Ile242, His243, Gln284, and Glu298. Positions 133–327 (RALMNELGEP…IAKLAAKIAV (195 aa)) constitute an ATP-grasp 1 domain. Positions 284, 298, and 300 each coordinate Mg(2+). Positions 284, 298, and 300 each coordinate Mn(2+). Positions 402–546 (IGVHHLELNE…YSTYEEENES (145 aa)) are oligomerization domain. The carbamoyl phosphate synthetic domain stretch occupies residues 547 to 929 (IVTEKPSVIV…ALYKGLVASG (383 aa)). Positions 671 to 861 (EQALSELGIP…MANLATKAIL (191 aa)) constitute an ATP-grasp 2 domain. ATP is bound by residues Arg707, Arg746, Ile748, Glu752, Gly777, Val778, His779, Ser780, Gln820, and Glu832. Residues Gln820, Glu832, and Asn834 each contribute to the Mg(2+) site. Mn(2+) is bound by residues Gln820, Glu832, and Asn834. The MGS-like domain maps to 930–1065 (IHIQPHGAVL…TAMTEGLVRS (136 aa)). The tract at residues 930-1065 (IHIQPHGAVL…TAMTEGLVRS (136 aa)) is allosteric domain.

Belongs to the CarB family. In terms of assembly, composed of two chains; the small (or glutamine) chain promotes the hydrolysis of glutamine to ammonia, which is used by the large (or ammonia) chain to synthesize carbamoyl phosphate. Tetramer of heterodimers (alpha,beta)4. The cofactor is Mg(2+). Requires Mn(2+) as cofactor.

It carries out the reaction hydrogencarbonate + L-glutamine + 2 ATP + H2O = carbamoyl phosphate + L-glutamate + 2 ADP + phosphate + 2 H(+). It catalyses the reaction hydrogencarbonate + NH4(+) + 2 ATP = carbamoyl phosphate + 2 ADP + phosphate + 2 H(+). It participates in amino-acid biosynthesis; L-arginine biosynthesis; carbamoyl phosphate from bicarbonate: step 1/1. Its pathway is pyrimidine metabolism; UMP biosynthesis via de novo pathway; (S)-dihydroorotate from bicarbonate: step 1/3. Its function is as follows. Large subunit of the glutamine-dependent carbamoyl phosphate synthetase (CPSase). CPSase catalyzes the formation of carbamoyl phosphate from the ammonia moiety of glutamine, carbonate, and phosphate donated by ATP, constituting the first step of 2 biosynthetic pathways, one leading to arginine and/or urea and the other to pyrimidine nucleotides. The large subunit (synthetase) binds the substrates ammonia (free or transferred from glutamine from the small subunit), hydrogencarbonate and ATP and carries out an ATP-coupled ligase reaction, activating hydrogencarbonate by forming carboxy phosphate which reacts with ammonia to form carbamoyl phosphate. In Bacillus caldolyticus, this protein is Carbamoyl phosphate synthase large chain.